A 591-amino-acid polypeptide reads, in one-letter code: 4-coumarate--CoA ligase-like 3 (591 aa).

ATP-binding residues include Ser-228, Ser-229, Gly-230, Thr-231, Ser-232, and Lys-236. A (E)-4-coumaroyl-AMP-binding site is contributed by Tyr-280. Arg-301 is a CoA binding site. Residues 303–375 are SBD1; the sequence is DAGDAVAAIG…QAFPHVDFIQ (73 aa). 4 residues coordinate (E)-4-coumaroyl-AMP: Ala-353, Gln-375, Gly-376, and Thr-380. Residues Gln-375, Gly-376, Thr-380, Asp-459, and Arg-474 each coordinate ATP. The SBD2 stretch occupies residues 376–440; that stretch reads GYGMTESTAV…LHGPGIMKGY (65 aa). Residues Lys-476 and Lys-480 each coordinate (E)-4-coumaroyl-AMP. CoA contacts are provided by Lys-482 and Gly-483. Lys-565 is a binding site for ATP.

It belongs to the ATP-dependent AMP-binding enzyme family. Mg(2+) serves as cofactor.

It carries out the reaction (E)-4-coumarate + ATP + CoA = (E)-4-coumaroyl-CoA + AMP + diphosphate. The enzyme catalyses (E)-4-coumarate + ATP + H(+) = (E)-4-coumaroyl-AMP + diphosphate. The catalysed reaction is (E)-4-coumaroyl-AMP + CoA = (E)-4-coumaroyl-CoA + AMP + H(+). Its function is as follows. Carboxylate--CoA ligase that may use 4-coumarate as substrate. Follows a two-step reaction mechanism, wherein the carboxylate substrate first undergoes adenylation by ATP, followed by a thioesterification in the presence of CoA to yield the final CoA thioester. In Oryza sativa subsp. japonica (Rice), this protein is 4-coumarate--CoA ligase-like 3 (4CLL3).